The sequence spans 509 residues: MLPALKKGGRPRDALGRFIRHHERLPVSLADTRGVLFVVSEMADFIKAGGLGDVAAALPRALRHRYDVRVLIPGYRAVLERAGKVEIVGRVLAHAALPACDIGRIVQSDGLPIYILLSRELFERDGSPYVSTSGSEFEDNAIRFATLSHAAADIAAGHAGLGWKPRLLHLNDWPCALAAGYVRWSGGTTPCLLTIHNLAYQGLVPYSMAGALGIPAERVAELEFYGQMSFLRGGIVNADHVNTVSVSYAKQITGPAQGCGLDRLLAGRAAKGVLTGIVNGIDASWDPRTDEYLDSHFSVNQWQGRQDNAAQVRKAFGLRESTGPLFAVVSRLVHQKGLDLICEVAPQIVAAGGQIAVIGGGEPDIERQVAELTRRYPGQVGAFIGFEEGLARRMFAGADFLLMPSRFEPCGLSQMYAQRFGCLPIAHATGGLIDTVDDGVTGFLFQHASVEALRRCLERAFRTFRLPGLLAAMRRAAMLRPSGWDVAGNKYLSLYERTAAIAPALATVS.

Lysine 47 is an ADP-alpha-D-glucose binding site.

It belongs to the glycosyltransferase 1 family. Bacterial/plant glycogen synthase subfamily.

It carries out the reaction [(1-&gt;4)-alpha-D-glucosyl](n) + ADP-alpha-D-glucose = [(1-&gt;4)-alpha-D-glucosyl](n+1) + ADP + H(+). Its pathway is glycan biosynthesis; glycogen biosynthesis. Synthesizes alpha-1,4-glucan chains using ADP-glucose. This Xanthomonas oryzae pv. oryzae (strain PXO99A) protein is Glycogen synthase.